A 132-amino-acid chain; its full sequence is Small ribosomal subunit protein uS8 (132 aa).

Belongs to the universal ribosomal protein uS8 family. As to quaternary structure, part of the 30S ribosomal subunit. Contacts proteins S5 and S12.

One of the primary rRNA binding proteins, it binds directly to 16S rRNA central domain where it helps coordinate assembly of the platform of the 30S subunit. This is Small ribosomal subunit protein uS8 from Mycolicibacterium vanbaalenii (strain DSM 7251 / JCM 13017 / BCRC 16820 / KCTC 9966 / NRRL B-24157 / PYR-1) (Mycobacterium vanbaalenii).